We begin with the raw amino-acid sequence, 37 residues long: Esculentin-2SE (37 aa).

A disulfide bond links Cys-31 and Cys-37.

In terms of tissue distribution, expressed by the skin glands.

The protein resides in the secreted. Its function is as follows. Mast cell degranulating peptide. Causes histamine release from rat peritoneal mast cells in vitro. Has antibacterial activity against the Gram-negative bacterium E.coli K12 and Gram-positive bacterium M.luteus NCT C2665. The polypeptide is Esculentin-2SE (Lithobates sevosus (Dusky gopher frog)).